The chain runs to 274 residues: Prothoracicostatic peptide (274 aa).

An N-terminal signal peptide occupies residues 1–19; sequence MRWCLFALWVFGVATVVTA. Residues 20–67 constitute a propeptide that is removed on maturation; it reads AEEPHHDAAPQTDNEVDLTEDDKRAWSSLHSGWAKRAWQDMSSAWGKR. Residue Trp76 is modified to Tryptophan amide. A propeptide spanning residues 77 to 91 is cleaved from the precursor; the sequence is GKRGWQDLNSAWGKR. Trp100 carries the post-translational modification Tryptophan amide. A propeptide spanning residues 101–136 is cleaved from the precursor; it reads GKRGWQDLNSAWGKRDDDEAMEKKSWQDLNSVWGKR. A Tryptophan amide modification is found at Trp145. Residues 146 to 148 constitute a propeptide that is removed on maturation; the sequence is GKR. Trp157 carries the tryptophan amide modification. Residues 158–172 constitute a propeptide that is removed on maturation; that stretch reads GKRGWNDISSVWGKR. A Tryptophan amide modification is found at Trp181. Residues 182–274 constitute a propeptide that is removed on maturation; it reads GKRAWQDMSS…NEHSATTNEA (93 aa).

The protein resides in the secreted. Functionally, inhibits ecdysteroid biosynthesis in the prothoracic gland of fifth instar larvae, with maximum inhibition during the spinning stage. When administered to day 8 fifth instar larvae it produces a significant delay in the commencement spinning behavior. This is Prothoracicostatic peptide from Bombyx mori (Silk moth).